Reading from the N-terminus, the 510-residue chain is Chromosomal replication initiator protein DnaA (510 aa).

Residues 1–87 (MSVELWQQCV…IGSRRSSAPR (87 aa)) form a domain I, interacts with DnaA modulators region. The interval 87-173 (RAAPNAPVSA…QVEGALKHTS (87 aa)) is domain II. The interval 140-160 (DSFDAMAEPASAPASSGRAEQ) is disordered. The segment covering 144–157 (AMAEPASAPASSGR) has biased composition (low complexity). The tract at residues 174–390 (YLNRTFTFDT…GALKRVIAHS (217 aa)) is domain III, AAA+ region. Positions 218, 220, 221, and 222 each coordinate ATP. The segment at 391–510 (HFMGRDITIE…YKNLLRTLTT (120 aa)) is domain IV, binds dsDNA.

It belongs to the DnaA family. Oligomerizes as a right-handed, spiral filament on DNA at oriC.

It localises to the cytoplasm. Functionally, plays an essential role in the initiation and regulation of chromosomal replication. ATP-DnaA binds to the origin of replication (oriC) to initiate formation of the DNA replication initiation complex once per cell cycle. Binds the DnaA box (a 9 base pair repeat at the origin) and separates the double-stranded (ds)DNA. Forms a right-handed helical filament on oriC DNA; dsDNA binds to the exterior of the filament while single-stranded (ss)DNA is stabiized in the filament's interior. The ATP-DnaA-oriC complex binds and stabilizes one strand of the AT-rich DNA unwinding element (DUE), permitting loading of DNA polymerase. After initiation quickly degrades to an ADP-DnaA complex that is not apt for DNA replication. Binds acidic phospholipids. This is Chromosomal replication initiator protein DnaA from Pseudomonas putida (strain GB-1).